A 284-amino-acid chain; its full sequence is 4-hydroxybenzoate octaprenyltransferase (284 aa).

Transmembrane regions (helical) follow at residues 16-36, 40-60, 91-111, 132-152, 157-177, 207-227, 231-251, and 259-279; these read PIGILLLLWPTLWALWMASDG, WTLVAIFTLGTVLMRSAGCAV, LLVALVLTLLAFALIWPLNTL, FFAIPQAYLGIAFGFGIPMGF, NTVPAAAWWLLVANVFWSVAY, AIIMFCYAMTLGIIGIVGWQF, IWFVAGLLLAAVCAAYHYTLI, and CFAAFNHNNWLGGAIFGGVAL.

It belongs to the UbiA prenyltransferase family. The cofactor is Mg(2+).

The protein resides in the cell inner membrane. The enzyme catalyses all-trans-octaprenyl diphosphate + 4-hydroxybenzoate = 4-hydroxy-3-(all-trans-octaprenyl)benzoate + diphosphate. The protein operates within cofactor biosynthesis; ubiquinone biosynthesis. Its function is as follows. Catalyzes the prenylation of para-hydroxybenzoate (PHB) with an all-trans polyprenyl group. Mediates the second step in the final reaction sequence of ubiquinone-8 (UQ-8) biosynthesis, which is the condensation of the polyisoprenoid side chain with PHB, generating the first membrane-bound Q intermediate 3-octaprenyl-4-hydroxybenzoate. The chain is 4-hydroxybenzoate octaprenyltransferase from Janthinobacterium sp. (strain Marseille) (Minibacterium massiliensis).